Reading from the N-terminus, the 695-residue chain is Highly divergent homeobox (695 aa).

DNA-binding regions (homeobox) lie at residues 3-63 and 440-503; these read LRSV…SSKS and ALQD…RLMG. Residues 56–81 form a disordered region; that stretch reads RRKMSSKSALESGGAPPGTAHTAPSV. The segment at 653–695 is disordered; the sequence is QQALLSDLPPELEEMDFNHTSPEPDDTSFSLSSLSEKNASDSL. The span at 679 to 695 shows a compositional bias: polar residues; sequence TSFSLSSLSEKNASDSL.

It is found in the nucleus. In Gallus gallus (Chicken), this protein is Highly divergent homeobox (HDX).